Here is a 352-residue protein sequence, read N- to C-terminus: Fe-S cluster assembly protein DRE2 (352 aa).

Residues 1–11 are compositionally biased toward polar residues; the sequence is MAPTAVYTQKD. Positions 1 to 24 are disordered; the sequence is MAPTAVYTQKDSPSSSQPSSKGPA. Residues 1–196 are N-terminal SAM-like domain; sequence MAPTAVYTQK…TVTSAPSVPL (196 aa). The segment at 196 to 237 is linker; it reads LLLRKRGDPAKKKALWALTTDASASPSTKIDADALLTAEDKA. Residues cysteine 243, cysteine 257, cysteine 260, and cysteine 262 each contribute to the [2Fe-2S] cluster site. A fe-S binding site A region spans residues 243 to 262; the sequence is CAPVDRSAPRRKKACKNCSC. Cysteine 315, cysteine 318, cysteine 326, and cysteine 329 together coordinate [4Fe-4S] cluster. 2 short sequence motifs (cx2C motif) span residues 315 to 318 and 326 to 329; these read CGSC and CAGC. The segment at 315 to 329 is fe-S binding site B; it reads CGSCFLGDAFRCAGC.

It belongs to the anamorsin family. Monomer. Interacts with TAH18. Interacts with MIA40. [2Fe-2S] cluster serves as cofactor. It depends on [4Fe-4S] cluster as a cofactor.

The protein localises to the cytoplasm. The protein resides in the mitochondrion intermembrane space. Functionally, component of the cytosolic iron-sulfur (Fe-S) protein assembly (CIA) machinery required for the maturation of extramitochondrial Fe-S proteins. Part of an electron transfer chain functioning in an early step of cytosolic Fe-S biogenesis, facilitating the de novo assembly of a [4Fe-4S] cluster on the scaffold complex CFD1-NBP35. Electrons are transferred to DRE2 from NADPH via the FAD- and FMN-containing protein TAH18. TAH18-DRE2 are also required for the assembly of the diferric tyrosyl radical cofactor of ribonucleotide reductase (RNR), probably by providing electrons for reduction during radical cofactor maturation in the catalytic small subunit RNR2. The polypeptide is Fe-S cluster assembly protein DRE2 (Coprinopsis cinerea (strain Okayama-7 / 130 / ATCC MYA-4618 / FGSC 9003) (Inky cap fungus)).